Consider the following 361-residue polypeptide: RuBisCO accumulation factor 1 (361 aa).

Positions 16 to 197 (NELAQELLRK…RKQIEQLLVD (182 aa)) are N-terminal alpha-helix. The segment at 221 to 347 (PRIVPVVGQL…VIILVRPRRI (127 aa)) is C-terminal beta-sheet.

The protein belongs to the RAF family. Homodimer. Forms an RbcL(8)-Raf1(8) complex. Each Raf1 dimer clamps the exterior of an RbcL dimer, protecting it. The extreme C-terminus (residues 354-361) inserts into the catalytic pocket of RbcL where the Glu-361 forms a salt bridge with 'Lys-202'. This insertion probably contributes to the assembly of RbcL(8). Forms complexes of many stoichiometries with RbcL with and without RbcS. RbcX and Raf1 can bind simultaneously to RbcL.

It localises to the cytoplasm. Its function is as follows. A major RuBisCO chaperone. Acts after GroEL-GroES chaperonin to fold and/or assemble the large subunit of RuBisCO (ccbL, rbcL). Cooperates with RbcX in RbcL folding, plays the major role in assembly of dimers into RbcL(8)-Raf1(8) intermediate complexes. RbcS replaces Raf1, leading to holoenzyme formation. In vitro acts as an antagonist to CcmM35, suggesting it might regulate RuBisCO condensation and decondensation. In Nostoc sp. (strain PCC 7120 / SAG 25.82 / UTEX 2576), this protein is RuBisCO accumulation factor 1.